The chain runs to 76 residues: Exodeoxyribonuclease 7 small subunit (76 aa).

This sequence belongs to the XseB family. Heterooligomer composed of large and small subunits.

It is found in the cytoplasm. The enzyme catalyses Exonucleolytic cleavage in either 5'- to 3'- or 3'- to 5'-direction to yield nucleoside 5'-phosphates.. Functionally, bidirectionally degrades single-stranded DNA into large acid-insoluble oligonucleotides, which are then degraded further into small acid-soluble oligonucleotides. The protein is Exodeoxyribonuclease 7 small subunit of Bacillus cereus (strain ATCC 14579 / DSM 31 / CCUG 7414 / JCM 2152 / NBRC 15305 / NCIMB 9373 / NCTC 2599 / NRRL B-3711).